The chain runs to 430 residues: Protein POLLENLESS 3-LIKE 2 (430 aa).

Residues 1 to 21 (MMRDVFRPTKSAPCSPAKPLG) form a disordered region. TPR repeat units lie at residues 40 to 73 (DSPYVRAKNVQLVEKDPERAIPLFWKAINAGDRV), 74 to 107 (DSALKDMAIVMKQQNRAEEAIEAIKSLRVRCSDQ), 110 to 143 (ESLDNILLDLYKRCGRLDDQIGLLKHKLFLIQKG), 170 to 203 (TRLLGNLGWALMQRDNFVEAEDAYRRALSIAPDN), 205 to 236 (KMCNLGICLMKQGRIDEAKETLRRVKPAVVDG), and 238 to 257 (RGVDSHLKAYERAQQMLNDL). A coiled-coil region spans residues 81–107 (AIVMKQQNRAEEAIEAIKSLRVRCSDQ). The interval 346–376 (KLKRTRSSSQGMGMLSGIGGDHEGETNTSTR) is disordered.

This sequence belongs to the MS5 protein family.

It localises to the nucleus. Probably involved in the regulation of cell division. The polypeptide is Protein POLLENLESS 3-LIKE 2 (Arabidopsis thaliana (Mouse-ear cress)).